The following is a 621-amino-acid chain: TOX high mobility group box family member 4 (621 aa).

Disordered stretches follow at residues 153–227 and 305–333; these read LGLS…QKPV and LDPA…ASIE. Position 176 is a phosphothreonine (Thr176). Phosphoserine is present on residues Ser178, Ser181, and Ser182. Residues 183-193 are compositionally biased toward basic and acidic residues; the sequence is LHEDGVEDFRR. Positions 208 to 218 are enriched in basic residues; the sequence is KQKAPKKRKKK. The Nuclear localization signal signature appears at 213–218; that stretch reads KKRKKK. Residues 223–291 constitute a DNA-binding region (HMG box); it reads PQKPVSAYAL…EYLKALAAYK (69 aa). The segment covering 307–319 has biased composition (pro residues); sequence PAPPSQTPSPPPM. Thr313 bears the Phosphothreonine mark. Position 315 is a phosphoserine (Ser315). Positions 320 to 333 are enriched in low complexity; the sequence is ATVDPASPAPASIE. Arg481 carries the post-translational modification Asymmetric dimethylarginine. The span at 510–525 shows a compositional bias: polar residues; sequence PTVESSPERPMNNSPE. Residues 510–529 are disordered; sequence PTVESSPERPMNNSPEAHTV. Ser533, Ser550, Ser552, Ser560, Ser562, and Ser567 each carry phosphoserine.

As to quaternary structure, component of the PNUTS-PP1 phosphatase complex, composed of PPP1R10/PNUTS, TOX4, WDR82 and PPP1CA or PPP1CB or PPP1CC. Interacts with PPP1R10/PNUTS. Interacts with FOXO1 and CREB1 (increased by cAMP); FOXO1 and CREB1 are required for full induction of TOX4-dependent activity and the interactions are inhibited by insulin. Expressed in liver (at protein level).

Its subcellular location is the nucleus. The protein resides in the chromosome. In liver, recruited to target gene promoters following treatment with dexamethasone and cAMP. Binding is decreased in presence of insulin. Functionally, transcription factor that modulates cell fate reprogramming from the somatic state to the pluripotent and neuronal fate. In liver, controls the expression of hormone-regulated gluconeogenic genes such as G6PC1 and PCK1. This regulation is independent of the insulin receptor activation. Also acts as a regulatory component of protein phosphatase 1 (PP1) complexes. Component of the PNUTS-PP1 protein phosphatase complex, a PP1 complex that regulates RNA polymerase II transcription pause-release. PNUTS-PP1 also plays a role in the control of chromatin structure and cell cycle progression during the transition from mitosis into interphase. This chain is TOX high mobility group box family member 4, found in Homo sapiens (Human).